The following is a 30-amino-acid chain: Thermophilic aminopeptidase 1 alpha chain (30 aa).

It belongs to the peptidase M42 family. 12 chains of two different but homologous types, alpha and beta, which can combine in various ratios. Requires a divalent metal cation as cofactor.

Functionally, metalloenzyme of broad specificity, releasing all N-terminal amino acids. The polypeptide is Thermophilic aminopeptidase 1 alpha chain (Geobacillus stearothermophilus (Bacillus stearothermophilus)).